Reading from the N-terminus, the 690-residue chain is DNA ligase (690 aa).

NAD(+) contacts are provided by residues 36 to 40, 85 to 86, and Glu-124; these read DSVYD and SL. Lys-126 serves as the catalytic N6-AMP-lysine intermediate. The NAD(+) site is built by Arg-147, Glu-184, Lys-308, and Lys-332. Cys-426, Cys-429, Cys-444, and Cys-449 together coordinate Zn(2+). The region spanning 614-690 is the BRCT domain; the sequence is NQSNVFDGKS…INENELKLLL (77 aa).

Belongs to the NAD-dependent DNA ligase family. LigA subfamily. The cofactor is Mg(2+). Mn(2+) serves as cofactor.

It carries out the reaction NAD(+) + (deoxyribonucleotide)n-3'-hydroxyl + 5'-phospho-(deoxyribonucleotide)m = (deoxyribonucleotide)n+m + AMP + beta-nicotinamide D-nucleotide.. Its function is as follows. DNA ligase that catalyzes the formation of phosphodiester linkages between 5'-phosphoryl and 3'-hydroxyl groups in double-stranded DNA using NAD as a coenzyme and as the energy source for the reaction. It is essential for DNA replication and repair of damaged DNA. The sequence is that of DNA ligase from Prochlorococcus marinus (strain NATL2A).